The sequence spans 379 residues: Leukocyte elastase inhibitor (379 aa).

An N-acetylmethionine modification is found at Met1. N6-acetyllysine occurs at positions 137 and 177. The tract at residues 351 to 379 (NFNADHPFIFFIRHNPSANILFLGRFSSP) is CARD-binding motif (CBM).

Belongs to the serpin family. Ov-serpin subfamily. In terms of assembly, monomer. Interacts (via C-terminus) with CASP1; CASP4 (via CARD domain) and CASP5; these interactions regulate the activity of inflammatory caspases. Interacts with PRTN3. Interacts with GZMH. Interacts with TMSB4. The N-terminus is blocked.

The protein resides in the secreted. It is found in the cytoplasm. Its subcellular location is the cytolytic granule. It localises to the early endosome. Functionally, neutrophil serine protease inhibitor that plays an essential role in the regulation of the innate immune response, inflammation and cellular homeostasis. Acts primarily to protect the cell from proteases released in the cytoplasm during stress or infection. These proteases are important in killing microbes but when released from granules, these potent enzymes also destroy host proteins and contribute to mortality. Regulates the activity of the neutrophil proteases elastase, cathepsin G, proteinase-3, chymase, chymotrypsin, and kallikrein-3. Also acts as a potent intracellular inhibitor of GZMH by directly blocking its proteolytic activity. During inflammation, limits the activity of inflammatory caspases CASP1, CASP4 and CASP5 by suppressing their caspase-recruitment domain (CARD) oligomerization and enzymatic activation. When secreted, promotes the proliferation of beta-cells via its protease inhibitory function. The sequence is that of Leukocyte elastase inhibitor (SERPINB1) from Equus caballus (Horse).